The sequence spans 397 residues: Succinyl-diaminopimelate desuccinylase (397 aa).

Zn(2+) is bound at residue histidine 73. Aspartate 75 is an active-site residue. Aspartate 106 is a Zn(2+) binding site. Glutamate 140 functions as the Proton acceptor in the catalytic mechanism. Residues glutamate 141, glutamate 169, and histidine 366 each coordinate Zn(2+).

It belongs to the peptidase M20A family. DapE subfamily. In terms of assembly, homodimer. Requires Zn(2+) as cofactor. The cofactor is Co(2+).

It catalyses the reaction N-succinyl-(2S,6S)-2,6-diaminopimelate + H2O = (2S,6S)-2,6-diaminopimelate + succinate. Its pathway is amino-acid biosynthesis; L-lysine biosynthesis via DAP pathway; LL-2,6-diaminopimelate from (S)-tetrahydrodipicolinate (succinylase route): step 3/3. In terms of biological role, catalyzes the hydrolysis of N-succinyl-L,L-diaminopimelic acid (SDAP), forming succinate and LL-2,6-diaminopimelate (DAP), an intermediate involved in the bacterial biosynthesis of lysine and meso-diaminopimelic acid, an essential component of bacterial cell walls. This is Succinyl-diaminopimelate desuccinylase from Rhizobium etli (strain ATCC 51251 / DSM 11541 / JCM 21823 / NBRC 15573 / CFN 42).